The primary structure comprises 258 residues: uncharacterized protein (258 aa).

A signal peptide spans 1-19 (MVGILPLCCSGCVPSLCCS). 3 consecutive transmembrane segments (helical) span residues 94-114 (GLLL…NWTG), 197-217 (CLIL…LPYI), and 219-239 (PGLS…SSLV).

The protein resides in the membrane. This is an uncharacterized protein from Homo sapiens (Human).